A 401-amino-acid chain; its full sequence is cAMP-dependent protein kinase type II-alpha regulatory subunit (401 aa).

At Ser2 the chain carries N-acetylserine. The tract at residues 2-135 (SHIQIPPGLT…RLQEACKDIL (134 aa)) is dimerization and phosphorylation. The tract at residues 43–65 (ARSRASTPPAAPPSGSQDFDPGA) is disordered. Residues 46 to 58 (RASTPPAAPPSGS) are compositionally biased toward low complexity. Ser48, Ser75, and Ser77 each carry phosphoserine. Position 96 is a phosphoserine; by PKA (Ser96). 3',5'-cyclic AMP contacts are provided by residues 136–257 (LFKN…ESVP), Glu205, Arg214, 258–401 (LLKS…DPGQ), Glu335, and Arg344. Residue Thr212 is modified to Phosphothreonine; by PDPK1. Phosphoserine is present on residues Ser347 and Ser392.

It belongs to the cAMP-dependent kinase regulatory chain family. The inactive form of the enzyme is composed of two regulatory chains and two catalytic chains. Activation by cAMP produces two active catalytic monomers and a regulatory dimer that binds four cAMP molecules. Interacts with AKAP4 and CBFA2T3. Interacts with the phosphorylated form of PJA2. Interacts with MYRIP; this interaction may link PKA to components of the exocytosis machinery, thus facilitating exocytosis, including insulin release. Forms a complex composed of PRKAR2A, GSK3B and GSKIP through GSKIP interaction; facilitates PKA-induced phosphorylation and regulates GSK3B activity. Interacts with ADCY8; inhibits adenylate cyclase activity through PKA phosphorylation. A second phosphorylation site has not been located. In terms of processing, phosphorylation of Thr-212 by PDPK1 seems to attenuate the activity of PKA, perhaps by strengthening interaction between the regulatory and the catalytic subunits. Four types of regulatory chains are found: I-alpha, I-beta, II-alpha, and II-beta. Their expression varies among tissues and is in some cases constitutive and in others inducible.

Its subcellular location is the cytoplasm. The protein resides in the cell membrane. Functionally, regulatory subunit of the cAMP-dependent protein kinases involved in cAMP signaling in cells. Type II regulatory chains mediate membrane association by binding to anchoring proteins, including the MAP2 kinase. This Bos taurus (Bovine) protein is cAMP-dependent protein kinase type II-alpha regulatory subunit (PRKAR2A).